A 313-amino-acid chain; its full sequence is D-alanine--D-alanine ligase (313 aa).

Residues 114-309 (KWLWKGVGLP…FSKLVLKLIS (196 aa)) enclose the ATP-grasp domain. 142-195 (DLTFPVIVKPSHEGSSIGMRKVDTLDALQEAVDFAQQYDSEILIEQWITGREFT) is a binding site for ATP. Mg(2+) contacts are provided by Asp-263, Glu-276, and Asn-278.

Belongs to the D-alanine--D-alanine ligase family. It depends on Mg(2+) as a cofactor. The cofactor is Mn(2+).

The protein localises to the cytoplasm. It carries out the reaction 2 D-alanine + ATP = D-alanyl-D-alanine + ADP + phosphate + H(+). Its pathway is cell wall biogenesis; peptidoglycan biosynthesis. Cell wall formation. The sequence is that of D-alanine--D-alanine ligase from Hydrogenovibrio crunogenus (strain DSM 25203 / XCL-2) (Thiomicrospira crunogena).